The sequence spans 334 residues: Cathepsin L2 (334 aa).

Residues 1 to 17 form the signal peptide; it reads MNLSLVLAAFCLGIASA. A propeptide spans 18 to 113 (activation peptide); sequence VPKFDQNLDT…KVFREPLFLD (96 aa). Intrachain disulfides connect Cys135/Cys178 and Cys169/Cys211. The active site involves Cys138. Asn221 is a glycosylation site (N-linked (GlcNAc...) asparagine). A disulfide bridge links Cys270 with Cys323. His277 is a catalytic residue. Asn292 carries an N-linked (GlcNAc...) asparagine glycan. Asn301 is an active-site residue.

The protein belongs to the peptidase C1 family. As to expression, predominantly expressed in the thymus and testis. Also expressed in corneal epithelium, and to a lesser extent in conjunctival epithelium and skin.

The protein localises to the lysosome. It carries out the reaction The recombinant enzyme hydrolyzes proteins (serum albumin, collagen) and synthetic substrates (Z-Phe-Arg-NHMec &gt; Z-Leu-Arg-NHMec &gt; Z-Val-Arg-NHMec).. With respect to regulation, inhibited by CST6. Cysteine protease. May have an important role in corneal physiology. This is Cathepsin L2 (CTSV) from Homo sapiens (Human).